The following is a 270-amino-acid chain: 4-hydroxy-tetrahydrodipicolinate reductase (270 aa).

Residues 8-13 (GALGRM), aspartate 34, 102-104 (GTT), and 128-131 (SQNY) each bind NAD(+). Residue histidine 160 is the Proton donor/acceptor of the active site. Histidine 161 is a (S)-2,3,4,5-tetrahydrodipicolinate binding site. Lysine 164 (proton donor) is an active-site residue. 170 to 171 (GT) is a (S)-2,3,4,5-tetrahydrodipicolinate binding site.

The protein belongs to the DapB family.

The protein localises to the cytoplasm. It carries out the reaction (S)-2,3,4,5-tetrahydrodipicolinate + NAD(+) + H2O = (2S,4S)-4-hydroxy-2,3,4,5-tetrahydrodipicolinate + NADH + H(+). The catalysed reaction is (S)-2,3,4,5-tetrahydrodipicolinate + NADP(+) + H2O = (2S,4S)-4-hydroxy-2,3,4,5-tetrahydrodipicolinate + NADPH + H(+). It functions in the pathway amino-acid biosynthesis; L-lysine biosynthesis via DAP pathway; (S)-tetrahydrodipicolinate from L-aspartate: step 4/4. Catalyzes the conversion of 4-hydroxy-tetrahydrodipicolinate (HTPA) to tetrahydrodipicolinate. The sequence is that of 4-hydroxy-tetrahydrodipicolinate reductase from Methanococcus maripaludis (strain C5 / ATCC BAA-1333).